Reading from the N-terminus, the 71-residue chain is Palustrin-Ca (71 aa).

Residues 1 to 22 (MFTLKKSLLLLFFLGTISLSLC) form the signal peptide. The propeptide occupies 23 to 40 (EQERDADGDEGEVEEVKR). A disulfide bond links C63 and C69.

This sequence belongs to the frog skin active peptide (FSAP) family. Brevinin subfamily. As to expression, expressed by the skin glands.

The protein localises to the secreted. Its subcellular location is the target cell membrane. Its function is as follows. Antibacterial peptide with amphipathic alpha-helical structure that exhibits potent broad-spectrum activity against Gram-positive and -negative bacteria. It is active against Listeria ATCC 54004 (MIC=30 ug/ml), S.aureus ATCC 25923 (MIC=7.8 ug/ml), S.suis 2 CVCC 606 (MIC=31.25 ug/ml), B.subtilis ADB403 (30 ug/ml), K.pneumoniae ATCC 700603 (MIC=60 ug/ml) and P.aeruginosa ATCC 227853 (MIC=30 ug/ml). Does not show activity against Salmonella ATCC 20020 and the fungus Candida albicans. Is also cytotoxic to HeLa cells at high concentrations. In addition, shows a strong antitumor activity but only a little hemolytic activity. Despite the presence of a Gly residue at position 10, this alpha-helical peptide remains relatively rigid, not exhibiting any significant flexibility during the molecular dynamics simulation. The peptide shows a preference for a position parallel to the target membrane that suggests it exerts its antimicrobial activity through a non-pore-forming mechanism of action, such as the carpet model or the interfacial activity model. This is Palustrin-Ca from Aquarana catesbeiana (American bullfrog).